A 231-amino-acid polypeptide reads, in one-letter code: Large ribosomal subunit protein uL1 (231 aa).

Belongs to the universal ribosomal protein uL1 family. In terms of assembly, part of the 50S ribosomal subunit.

Functionally, binds directly to 23S rRNA. The L1 stalk is quite mobile in the ribosome, and is involved in E site tRNA release. Its function is as follows. Protein L1 is also a translational repressor protein, it controls the translation of the L11 operon by binding to its mRNA. This Neisseria meningitidis serogroup C (strain 053442) protein is Large ribosomal subunit protein uL1.